Here is a 229-residue protein sequence, read N- to C-terminus: Large ribosomal subunit protein uL1 (229 aa).

Belongs to the universal ribosomal protein uL1 family. Part of the 50S ribosomal subunit.

Binds directly to 23S rRNA. The L1 stalk is quite mobile in the ribosome, and is involved in E site tRNA release. Its function is as follows. Protein L1 is also a translational repressor protein, it controls the translation of the L11 operon by binding to its mRNA. This Bifidobacterium animalis subsp. lactis (strain AD011) protein is Large ribosomal subunit protein uL1.